Consider the following 301-residue polypeptide: Ribosomal RNA small subunit methyltransferase A (301 aa).

Residues N29, L31, G56, E77, D102, and N127 each contribute to the S-adenosyl-L-methionine site.

It belongs to the class I-like SAM-binding methyltransferase superfamily. rRNA adenine N(6)-methyltransferase family. RsmA subfamily.

It localises to the cytoplasm. It carries out the reaction adenosine(1518)/adenosine(1519) in 16S rRNA + 4 S-adenosyl-L-methionine = N(6)-dimethyladenosine(1518)/N(6)-dimethyladenosine(1519) in 16S rRNA + 4 S-adenosyl-L-homocysteine + 4 H(+). Functionally, specifically dimethylates two adjacent adenosines (A1518 and A1519) in the loop of a conserved hairpin near the 3'-end of 16S rRNA in the 30S particle. May play a critical role in biogenesis of 30S subunits. The sequence is that of Ribosomal RNA small subunit methyltransferase A from Halothermothrix orenii (strain H 168 / OCM 544 / DSM 9562).